Consider the following 499-residue polypeptide: Glutelin type-A 2 (499 aa).

An N-terminal signal peptide occupies residues 1-24 (MASINRPIVFFTVCLFLLCDGSLA). 2 disulfides stabilise this stretch: cysteine 46-cysteine 79 and cysteine 122-cysteine 313. A Cupin type-1 1 domain is found at 51–248 (LQAFEPIRSV…AFGISNQVAR (198 aa)). The interval 280–300 (EQGQMQSREHYQEGGYQQSQY) is disordered. Residues 319 to 468 (QNIDNPNRAD…AYRISREEAQ (150 aa)) enclose the Cupin type-1 2 domain.

It belongs to the 11S seed storage protein (globulins) family. In terms of assembly, hexamer; each subunit is composed of an acidic and a basic chain derived from a single precursor and linked by a disulfide bond.

Seed storage protein. In Oryza sativa subsp. japonica (Rice), this protein is Glutelin type-A 2 (GLUA2).